Reading from the N-terminus, the 809-residue chain is Sodium/hydrogen exchanger 2 (809 aa).

Helical transmembrane passes span 107-127 (IVPE…IIFG), 138-158 (TDVF…YFMP), 169-189 (IFWY…VSLF), 209-229 (LFGS…FENI), 237-257 (ILVF…YNLF), 278-298 (FFVV…IAAF), and 308-328 (VIEP…AEMF). N-linked (GlcNAc...) asparagine glycosylation occurs at N350. Helical transmembrane passes span 361–381 (YFMK…MGVS), 392–412 (AFVC…VFVL), 430–450 (FIIA…FLLP), and 459–479 (LFIT…GITI). Basic and acidic residues-rich tracts occupy residues 648–660 (IRKD…ERRA) and 793–809 (RASE…SDKP). 2 disordered regions span residues 648–700 (IRKD…EADA) and 734–809 (EVDA…SDKP).

It belongs to the monovalent cation:proton antiporter 1 (CPA1) transporter (TC 2.A.36) family. As to quaternary structure, interacts with CHP1 and CHP2. High levels in intestine and kidney. Strongly expressed in gastric epithelial cells, with particularly high expression levels in mucous cells.

The protein localises to the apical cell membrane. It carries out the reaction Na(+)(in) + H(+)(out) = Na(+)(out) + H(+)(in). In terms of biological role, plasma membrane Na(+)/H(+) antiporter. Mediates the electroneutral exchange of intracellular H(+) ions for extracellular Na(+). Major apical Na(+)/H(+) exchanger in the base of the colonic crypt. Controls in the colonic crypt intracellular pH (pHi) to direct colonic epithelial cell differentiation into the absorptive enterocyte lineage at the expense of the secretory lineage. This is Sodium/hydrogen exchanger 2 (SLC9A2) from Oryctolagus cuniculus (Rabbit).